The sequence spans 610 residues: UvrABC system protein C (610 aa).

One can recognise a GIY-YIG domain in the interval 16–94 (SQPGVYRMYD…IKLYQPRYNV (79 aa)). Positions 204-239 (DQVLTQLISRMETASQNLEFEEAARIRDQIQAVRRV) constitute a UVR domain.

The protein belongs to the UvrC family. Interacts with UvrB in an incision complex.

Its subcellular location is the cytoplasm. Functionally, the UvrABC repair system catalyzes the recognition and processing of DNA lesions. UvrC both incises the 5' and 3' sides of the lesion. The N-terminal half is responsible for the 3' incision and the C-terminal half is responsible for the 5' incision. The polypeptide is UvrABC system protein C (Escherichia coli O139:H28 (strain E24377A / ETEC)).